The primary structure comprises 208 residues: Small ribosomal subunit protein uS3 (208 aa).

The region spanning 16 to 85 (VDEYLKNKLP…KPQIEVKQIE (70 aa)) is the KH type-2 domain.

The protein belongs to the universal ribosomal protein uS3 family. As to quaternary structure, part of the 30S ribosomal subunit.

Its function is as follows. Binds the lower part of the 30S subunit head. The polypeptide is Small ribosomal subunit protein uS3 (Methanococcus aeolicus (strain ATCC BAA-1280 / DSM 17508 / OCM 812 / Nankai-3)).